Consider the following 822-residue polypeptide: MGTFGTESPLRLQVSSCLKTLSTSRDSGEIVHALRTLMRCLDDGEFTRIHHTHALQVLVSAQSSHWFSRSHDEDEEEMKKLWGEIIIRGPAEQTLLTLLDTISSTGESEALDRCVSALEMFLSAARLQVLLWSRCEVSGASADSPQLTETVIGHLAALPSITSNHLHTNTPDIFLPQQYYPLLAASILDTLEKTCHALRAGRDCSLGFVSQVLGKVCIQGYSSQMFETLGPRLSFVTREDALYQRVTQKLMENVPERCTESVITGLIRSLSGAAAVSRLMGNLVLTNKKAQFVLTHKLILQQYQHPTRLLKSVLGYLAVDSSRRPLLKQVLRSVCQVWCNSSAVKHTCVEQQLYVSKALLLCVALLDDSEIQELRQEMLQCMLGGVQCRLDSNVERIRRMGMVVGECLSHRLDTPGSQLKFQYGADEEIGELKSLMESLAVNDDEEEQPDASNSLQPEPKVEAPVSSQSVASDPGNGSESELDSDDDLTPYDMSADQEKKKSAPPRYVRDCLEGLMSSDDAERFELSLQVAETLLRKNVKATQEVSVQFSKVLLHLEDRYNTALFLSLRQNAMVALTVTDIKPVVDYWTTEFYALNYSLRQRLDILEVLALAAQELSEPVTNKHTGAEPITAVTPLGQSDDITHWRQIVDKRIQSKTRRISKGVTQPVKAVPNRYAPVAGFFFFPLFRSYDRPQTTFDLLGGDHLVLGRLLHTLGLLMHLAVNAPVVSQMGRALLDFVWAVRFHTDQMVRRGVMFAVCAVFLSMPSENLLTELGDDLMETRAWLADVAESDCDSDCRSLAVQSLMLMDKNLKSQLQIPDMET.

A disordered region spans residues 442–504 (NDDEEEQPDA…ADQEKKKSAP (63 aa)). The span at 465–477 (VSSQSVASDPGNG) shows a compositional bias: polar residues. The span at 480 to 489 (SELDSDDDLT) shows a compositional bias: acidic residues.

This sequence belongs to the TEL2 family.

It localises to the cytoplasm. The protein resides in the membrane. The protein localises to the nucleus. Functionally, regulator of the DNA damage response (DDR). Part of the TTT complex that is required to stabilize protein levels of the phosphatidylinositol 3-kinase-related protein kinase (PIKK) family proteins. Promotes assembly, stabilizes and maintains the activity of TORC complexes, which regulate cell growth and survival in response to nutrient and hormonal signals. May be involved in telomere length regulation. This chain is Telomere length regulation protein TEL2 homolog (telo2), found in Danio rerio (Zebrafish).